A 466-amino-acid polypeptide reads, in one-letter code: MALLTAAARLLGTKNASCLVLAARHASASSTNLKDILADLIPKEQARIKTFRQQHGKTVVGQITVDMMYGGMRGMKGLVYETSVLDPDEGIRFRGFSIPECQKLLPKAKGGEEPLPEGLFWLLVTGQIPTEEQVSWLSKEWAKRAALPSHVVTMLDNFPTNLHPMSQLSAAVTALNSESNFARAYAEGISRTKYWELIYEDSMDLIAKLPCIAAKIYRNLYREGSGIGAIDSNLDWSHNFTNMLGYTDSQFTELMRLYLTIHSDHEGGNVSAHTSHLVGSALSDPYLSFAAAMNGLAGPLHGLANQEVLVWLTQLQKEVGKDVSDEKLRDYIWNTLNSGRVVPGYGHAVLRKTDPRYTCQREFALKHLPNDPMFKLVAQLYKIVPNVLLEQGKAKNPWPNVDAHSGVLLQYYGMTEMNYYTVLFGVSRALGVLAQLIWSRALGFPLERPKSMSTEGLMKFVDSKSG.

The N-terminal 27 residues, 1-27 (MALLTAAARLLGTKNASCLVLAARHAS), are a transit peptide targeting the mitochondrion. Positions 2–21 (ALLTAAARLLGTKNASCLVL) match the SIFI-degron motif. K57 is subject to N6-succinyllysine. An N6-acetyllysine; alternate modification is found at K76. K76 bears the N6-succinyllysine; alternate mark. N6-succinyllysine occurs at positions 103 and 193. The active site involves H301. N6-acetyllysine; alternate is present on residues K321 and K327. N6-succinyllysine; alternate occurs at positions 321 and 327. Residue H347 is part of the active site. R356 is an oxaloacetate binding site. K375 bears the N6-acetyllysine; alternate mark. K375 carries the N6-succinyllysine; alternate modification. At K382 the chain carries N6-acetyllysine. K393 carries the N6-acetyllysine; alternate modification. K393 carries the post-translational modification N6-succinyllysine; alternate. K395 bears the N6,N6,N6-trimethyllysine mark. Residue D402 is part of the active site. Residues R428 and R448 each coordinate oxaloacetate. K450 is subject to N6-succinyllysine. The residue at position 459 (K459) is an N6-acetyllysine; alternate. An N6-succinyllysine; alternate modification is found at K459.

This sequence belongs to the citrate synthase family. As to quaternary structure, homodimer. Methylated. Trimethylation at Lys-395 by CSKMT decreases citrate synthase activity. Post-translationally, in response to mitochondrial stress, the precursor protein is ubiquitinated by the SIFI complex in the cytoplasm before mitochondrial import, leading to its degradation. Within the SIFI complex, UBR4 initiates ubiquitin chain that are further elongated or branched by KCMF1.

Its subcellular location is the mitochondrion matrix. The enzyme catalyses oxaloacetate + acetyl-CoA + H2O = citrate + CoA + H(+). The protein operates within carbohydrate metabolism; tricarboxylic acid cycle; isocitrate from oxaloacetate: step 1/2. In terms of biological role, key enzyme of the Krebs tricarboxylic acid cycle which catalyzes the synthesis of citrate from acetyl coenzyme A and oxaloacetate. In Macaca fascicularis (Crab-eating macaque), this protein is Citrate synthase, mitochondrial (CS).